The sequence spans 257 residues: Acetylglutamate kinase (257 aa).

Residues 43-44 (GG), R65, and N157 each bind substrate.

It belongs to the acetylglutamate kinase family. ArgB subfamily.

Its subcellular location is the cytoplasm. The enzyme catalyses N-acetyl-L-glutamate + ATP = N-acetyl-L-glutamyl 5-phosphate + ADP. It functions in the pathway amino-acid biosynthesis; L-arginine biosynthesis; N(2)-acetyl-L-ornithine from L-glutamate: step 2/4. In terms of biological role, catalyzes the ATP-dependent phosphorylation of N-acetyl-L-glutamate. The chain is Acetylglutamate kinase from Mannheimia succiniciproducens (strain KCTC 0769BP / MBEL55E).